A 282-amino-acid chain; its full sequence is PILR alpha-associated neural protein (282 aa).

The N-terminal stretch at 1 to 31 (MESRMWPALLLSHLLPLWPLLLLPLPPPAQG) is a signal peptide. Residues 28–99 (PAQGSSSSPR…PSGFEEGPPS (72 aa)) are disordered. The Extracellular segment spans residues 32-178 (SSSSPRTPPA…FGGRGEGVDP (147 aa)). Residues 46 to 56 (PCARGGPSAPR) show a composition bias toward low complexity. T140 is a glycosylation site (O-linked (GalNAc...) threonine). A helical transmembrane segment spans residues 179-199 (QLYVTITISIIIVLVATGIIF). The Cytoplasmic portion of the chain corresponds to 200-282 (KFCWDRSQKR…QLNRIPLVNL (83 aa)). Residues 209–282 (RRRPSGQQGA…QLNRIPLVNL (74 aa)) form a disordered region. Residues 213 to 229 (SGQQGALRQEESQQPLT) are compositionally biased toward polar residues.

In terms of processing, O-glycosylation at Thr-140 is essential for recognition by PILRA. Mainly expressed in adult brain and cerebellum. Weaker expression in fetal brain and virtually no expression in spleen, heart, kidney, liver and dorsal ganglion relative to brain.

It localises to the membrane. Acts as a ligand for PILRA in neural tissues, where it may be involved in immune regulation. This chain is PILR alpha-associated neural protein (PIANP), found in Homo sapiens (Human).